A 438-amino-acid chain; its full sequence is DNA primase small subunit (438 aa).

Active-site residues include E63, D127, and D129. The Zinc knuckle motif motif lies at 139–149 (CCSGAGVCLKC).

This sequence belongs to the eukaryotic-type primase small subunit family. As to quaternary structure, heterodimer of a catalytic subunit Prim1 and a regulatory subunit Prim2, also known as the DNA primase complex. Component of the alpha DNA polymerase complex (also known as the alpha DNA polymerase-primase complex) consisting of four subunits: the catalytic subunit PolA1, the regulatory subunit PolA2, and the primase complex subunits Prim1 and Prim2 respectively. PolA1 associates with the DNA primase complex before association with PolA2. Mg(2+) serves as cofactor. Mn(2+) is required as a cofactor. Expressed in embryos (at protein level).

Its activity is regulated as follows. The presence of the regulatory subunit Prim2 accelerates the kinetics of initiation and primer extension. In terms of biological role, catalytic subunit of the DNA primase complex and component of the DNA polymerase alpha complex (also known as the alpha DNA polymerase-primase complex) which play an essential role in the initiation of DNA synthesis. During the S phase of the cell cycle, the DNA polymerase alpha complex (composed of a catalytic subunit PolA1, an accessory subunit PolA2 and two primase subunits, the catalytic subunit Prim1 and the regulatory subunit Prim2) is recruited to DNA at the replicative forks. The primase subunit of the polymerase alpha complex initiates DNA synthesis by oligomerising short RNA primers on both leading and lagging strands. These primers are initially extended by the polymerase alpha catalytic subunit and subsequently transferred to polymerase delta and polymerase epsilon for processive synthesis on the lagging and leading strand, respectively. In the primase complex, both subunits are necessary for the initial di-nucleotide formation, but the extension of the primer depends only on the catalytic subunit. Can add both ribo- and deoxynucleotides during elongation of the primers. Binds single stranded DNA. The protein is DNA primase small subunit of Drosophila melanogaster (Fruit fly).